The sequence spans 132 residues: Translation initiation factor 2 subunit beta (132 aa).

Positions 1–30 (MDYEEQLDRAMDEKPDVTGSETRFEVPDPN) are disordered.

Belongs to the eIF-2-beta/eIF-5 family. Heterotrimer composed of an alpha, a beta and a gamma chain.

EIF-2 functions in the early steps of protein synthesis by forming a ternary complex with GTP and initiator tRNA. This Halobacterium salinarum (strain ATCC 29341 / DSM 671 / R1) protein is Translation initiation factor 2 subunit beta.